Consider the following 195-residue polypeptide: Imidazole glycerol phosphate synthase subunit HisH (195 aa).

The Glutamine amidotransferase type-1 domain maps to 1 to 193; the sequence is MIAIVDYGVG…RETTCNSTQQ (193 aa). Residue Cys78 is the Nucleophile of the active site. Catalysis depends on residues His168 and Glu170.

In terms of assembly, heterodimer of HisH and HisF.

The protein localises to the cytoplasm. The enzyme catalyses 5-[(5-phospho-1-deoxy-D-ribulos-1-ylimino)methylamino]-1-(5-phospho-beta-D-ribosyl)imidazole-4-carboxamide + L-glutamine = D-erythro-1-(imidazol-4-yl)glycerol 3-phosphate + 5-amino-1-(5-phospho-beta-D-ribosyl)imidazole-4-carboxamide + L-glutamate + H(+). It catalyses the reaction L-glutamine + H2O = L-glutamate + NH4(+). The protein operates within amino-acid biosynthesis; L-histidine biosynthesis; L-histidine from 5-phospho-alpha-D-ribose 1-diphosphate: step 5/9. Functionally, IGPS catalyzes the conversion of PRFAR and glutamine to IGP, AICAR and glutamate. The HisH subunit catalyzes the hydrolysis of glutamine to glutamate and ammonia as part of the synthesis of IGP and AICAR. The resulting ammonia molecule is channeled to the active site of HisF. In Exiguobacterium sibiricum (strain DSM 17290 / CCUG 55495 / CIP 109462 / JCM 13490 / 255-15), this protein is Imidazole glycerol phosphate synthase subunit HisH.